An 823-amino-acid polypeptide reads, in one-letter code: Lon protease (823 aa).

The Lon N-terminal domain maps to 51 to 246 (IPILPLRNMV…RLLFILNREY (196 aa)). 397-404 (GPPGVGKT) contacts ATP. The 183-residue stretch at 633–815 (NDYAGVVTGL…QQVVDLALLR (183 aa)) folds into the Lon proteolytic domain. Catalysis depends on residues serine 721 and lysine 764.

The protein belongs to the peptidase S16 family. In terms of assembly, homohexamer. Organized in a ring with a central cavity.

Its subcellular location is the cytoplasm. It catalyses the reaction Hydrolysis of proteins in presence of ATP.. In terms of biological role, ATP-dependent serine protease that mediates the selective degradation of mutant and abnormal proteins as well as certain short-lived regulatory proteins. Required for cellular homeostasis and for survival from DNA damage and developmental changes induced by stress. Degrades polypeptides processively to yield small peptide fragments that are 5 to 10 amino acids long. Binds to DNA in a double-stranded, site-specific manner. This chain is Lon protease, found in Parabacteroides distasonis (strain ATCC 8503 / DSM 20701 / CIP 104284 / JCM 5825 / NCTC 11152).